A 189-amino-acid polypeptide reads, in one-letter code: Elongation factor P 2 (189 aa).

It belongs to the elongation factor P family.

It is found in the cytoplasm. It participates in protein biosynthesis; polypeptide chain elongation. Involved in peptide bond synthesis. Stimulates efficient translation and peptide-bond synthesis on native or reconstituted 70S ribosomes in vitro. Probably functions indirectly by altering the affinity of the ribosome for aminoacyl-tRNA, thus increasing their reactivity as acceptors for peptidyl transferase. The chain is Elongation factor P 2 from Mesorhizobium japonicum (strain LMG 29417 / CECT 9101 / MAFF 303099) (Mesorhizobium loti (strain MAFF 303099)).